The following is a 452-amino-acid chain: Na(+)/H(+) antiporter NhaA (452 aa).

Helical transmembrane passes span 27-47, 78-98, 114-134, 141-161, 172-192, 201-221, 222-242, 316-336, 346-366, 388-408, and 421-441; these read FLHI…TALI, LHFW…GMEI, ILPI…YLSF, IYGW…ILAL, IILL…IAFF, GLAI…ISFA, SAWL…VTGI, PWVA…VSFA, FLIV…GILA, ILLI…VSML, and IGVL…GLIY.

The protein belongs to the NhaA Na(+)/H(+) (TC 2.A.33) antiporter family.

The protein resides in the cell inner membrane. It carries out the reaction Na(+)(in) + 2 H(+)(out) = Na(+)(out) + 2 H(+)(in). Na(+)/H(+) antiporter that extrudes sodium in exchange for external protons. In Bartonella bacilliformis (strain ATCC 35685 / KC583 / Herrer 020/F12,63), this protein is Na(+)/H(+) antiporter NhaA.